We begin with the raw amino-acid sequence, 57 residues long: Large ribosomal subunit protein bL32 (57 aa).

Basic residues predominate over residues 1 to 20 (MAVPKKKTSKAKRDQRRATW). A disordered region spans residues 1–24 (MAVPKKKTSKAKRDQRRATWRRQA).

Belongs to the bacterial ribosomal protein bL32 family.

The polypeptide is Large ribosomal subunit protein bL32 (Gloeothece citriformis (strain PCC 7424) (Cyanothece sp. (strain PCC 7424))).